A 545-amino-acid polypeptide reads, in one-letter code: Ribulokinase (545 aa).

Belongs to the ribulokinase family.

The enzyme catalyses D-ribulose + ATP = D-ribulose 5-phosphate + ADP + H(+). It catalyses the reaction L-ribulose + ATP = L-ribulose 5-phosphate + ADP + H(+). Its pathway is carbohydrate degradation; L-arabinose degradation via L-ribulose; D-xylulose 5-phosphate from L-arabinose (bacterial route): step 2/3. The sequence is that of Ribulokinase from Staphylococcus aureus (strain Mu3 / ATCC 700698).